Reading from the N-terminus, the 584-residue chain is Protein disulfide-isomerase-like protein of the testis (584 aa).

Residues 1 to 20 (MDLLWMPLLLVAACVSAVHS) form the signal peptide. 4 N-linked (GlcNAc...) asparagine glycosylation sites follow: Asn58, Asn128, Asn160, and Asn340. The Thioredoxin domain occupies 388–451 (LVKQLVGKNF…IAKIDVTAND (64 aa)). Residue Asn540 is glycosylated (N-linked (GlcNAc...) asparagine). The Prevents secretion from ER signature appears at 581–584 (KEEL).

Belongs to the protein disulfide isomerase family. Homodimer. The homodimer is not disulfide-linked. Interacts with ERO1A and CLGN. N-glycosylated. As to expression, testis-specific.

It is found in the endoplasmic reticulum. Its function is as follows. Probable redox-inactive chaperone involved in spermatogenesis. This chain is Protein disulfide-isomerase-like protein of the testis (PDILT), found in Homo sapiens (Human).